The chain runs to 224 residues: Large ribosomal subunit protein uL4 (224 aa).

The segment at 52–109 (AAARQGTHSTKTRGDVSGGGRKPYRQKGTGRARQGSTRTPQFTGGGVVHGPKPRDYSQ) is disordered.

The protein belongs to the universal ribosomal protein uL4 family. Part of the 50S ribosomal subunit.

In terms of biological role, one of the primary rRNA binding proteins, this protein initially binds near the 5'-end of the 23S rRNA. It is important during the early stages of 50S assembly. It makes multiple contacts with different domains of the 23S rRNA in the assembled 50S subunit and ribosome. Functionally, forms part of the polypeptide exit tunnel. This chain is Large ribosomal subunit protein uL4, found in Mycobacterium ulcerans (strain Agy99).